Consider the following 179-residue polypeptide: UPF0227 protein Sbal_2415 (179 aa).

It belongs to the UPF0227 family.

The polypeptide is UPF0227 protein Sbal_2415 (Shewanella baltica (strain OS155 / ATCC BAA-1091)).